Here is a 202-residue protein sequence, read N- to C-terminus: Probable adenylyl-sulfate kinase (202 aa).

An ATP-binding site is contributed by 36–43 (GLSGSGKS). The active-site Phosphoserine intermediate is Ser110.

Belongs to the APS kinase family.

It catalyses the reaction adenosine 5'-phosphosulfate + ATP = 3'-phosphoadenylyl sulfate + ADP + H(+). The protein operates within sulfur metabolism; hydrogen sulfide biosynthesis; sulfite from sulfate: step 2/3. Functionally, catalyzes the synthesis of activated sulfate. The protein is Probable adenylyl-sulfate kinase of Halalkalibacterium halodurans (strain ATCC BAA-125 / DSM 18197 / FERM 7344 / JCM 9153 / C-125) (Bacillus halodurans).